The primary structure comprises 282 residues: Pantothenate synthetase (282 aa).

Residue 30–37 (MGALHRGH) coordinates ATP. His37 serves as the catalytic Proton donor. Residue Gln61 participates in (R)-pantoate binding. Gln61 lines the beta-alanine pocket. 147–150 (GEKD) contacts ATP. Position 153 (Gln153) interacts with (R)-pantoate. 184–187 (LSSR) provides a ligand contact to ATP.

This sequence belongs to the pantothenate synthetase family. In terms of assembly, homodimer.

It localises to the cytoplasm. It carries out the reaction (R)-pantoate + beta-alanine + ATP = (R)-pantothenate + AMP + diphosphate + H(+). The protein operates within cofactor biosynthesis; (R)-pantothenate biosynthesis; (R)-pantothenate from (R)-pantoate and beta-alanine: step 1/1. In terms of biological role, catalyzes the condensation of pantoate with beta-alanine in an ATP-dependent reaction via a pantoyl-adenylate intermediate. In Rhizorhabdus wittichii (strain DSM 6014 / CCUG 31198 / JCM 15750 / NBRC 105917 / EY 4224 / RW1) (Sphingomonas wittichii), this protein is Pantothenate synthetase.